A 163-amino-acid polypeptide reads, in one-letter code: Nucleotide-binding protein APL_1231 (163 aa).

Belongs to the YajQ family.

Functionally, nucleotide-binding protein. This Actinobacillus pleuropneumoniae serotype 5b (strain L20) protein is Nucleotide-binding protein APL_1231.